Here is an 888-residue protein sequence, read N- to C-terminus: Glutamate receptor 3 (888 aa).

An N-terminal signal peptide occupies residues 1 to 22 (MGQSVLRAVFFLVLGLLGHSHG). Residues 23 to 546 (GFPNTISIGG…GVFSFLDPLA (524 aa)) lie on the Extracellular side of the membrane. N-linked (GlcNAc...) asparagine glycosylation is found at Asn-57, Asn-260, Asn-374, Asn-409, and Asn-416. Cysteines 85 and 334 form a disulfide. Pro-502, Thr-504, and Arg-509 together coordinate L-glutamate. Residues 547-567 (YEIWMCIVFAYIGVSVVLFLV) form a helical membrane-spanning segment. The Cytoplasmic segment spans residues 568–596 (SRFSPYEWHLEDNNEEPRDPQSPPDPPNE). The helical; Pore-forming intramembrane region spans 597-612 (FGIFNSLWFSLGAFMQ). The stretch at 613–615 (QGC) is an intramembrane region. Cys-615 is lipidated: S-palmitoyl cysteine. Over 616–621 (DISPRS) the chain is Cytoplasmic. A helical transmembrane segment spans residues 622–642 (LSGRIVGGVWWFFTLIIISSY). The Extracellular segment spans residues 643–817 (TANLAAFLTV…DKTSALSLSN (175 aa)). Residues Ser-680, Thr-681, and Glu-731 each coordinate L-glutamate. Cys-744 and Cys-799 are joined by a disulfide. Residues 818–838 (VAGVFYILVGGLGLAMMVALI) traverse the membrane as a helical segment. The Cytoplasmic portion of the chain corresponds to 839-888 (EFCYKSRAESKRMKLTKNTQNFKPAPATNTQNYATYREGYNVYGTESVKI). Cys-841 carries the S-palmitoyl cysteine lipid modification. 2 positions are modified to phosphotyrosine: Tyr-871 and Tyr-881.

The protein belongs to the glutamate-gated ion channel (TC 1.A.10.1) family. GRIA3 subfamily. As to quaternary structure, homotetramer or heterotetramer of pore-forming glutamate receptor subunits. Tetramers may be formed by the dimerization of dimers. Interacts with PICK1, GRIP1 and GRIP2. Found in a complex with GRIA1, GRIA2, GRIA4, CNIH2, CNIH3, CACNG2, CACNG3, CACNG4, CACNG5, CACNG7 and CACNG8. Interacts with CACNG5. Found in a complex with GRIA1, GRIA2, GRIA4, DLG4, CACNG8 and CNIH2.

It localises to the cell membrane. Its subcellular location is the postsynaptic cell membrane. It is found in the postsynaptic density membrane. It catalyses the reaction Ca(2+)(in) = Ca(2+)(out). Functionally, ionotropic glutamate receptor that functions as a ligand-gated cation channel, gated by L-glutamate and glutamatergic agonists such as alpha-amino-3-hydroxy-5-methyl-4-isoxazolepropionic acid (AMPA), quisqualic acid, and kainic acid. L-glutamate acts as an excitatory neurotransmitter at many synapses in the central nervous system and plays an important role in fast excitatory synaptic transmission by inducing long-term potentiation. Binding of the excitatory neurotransmitter L-glutamate induces a conformation change, leading to the opening of the cation channel, and thereby converts the chemical signal to an electrical impulse upon entry of calcium. The receptor then desensitizes rapidly and enters a transient inactive state, characterized by the presence of bound agonist. In the presence of CACNG8, shows resensitization which is characterized by a delayed accumulation of current flux upon continued application of glutamate. This Rattus norvegicus (Rat) protein is Glutamate receptor 3.